We begin with the raw amino-acid sequence, 167 residues long: Small ribosomal subunit protein uS5 (167 aa).

The 64-residue stretch at 12–75 folds into the S5 DRBM domain; that stretch reads LQEKLITVNR…EQARRNMITI (64 aa).

It belongs to the universal ribosomal protein uS5 family. As to quaternary structure, part of the 30S ribosomal subunit. Contacts proteins S4 and S8.

In terms of biological role, with S4 and S12 plays an important role in translational accuracy. Located at the back of the 30S subunit body where it stabilizes the conformation of the head with respect to the body. This is Small ribosomal subunit protein uS5 from Buchnera aphidicola subsp. Acyrthosiphon pisum (strain APS) (Acyrthosiphon pisum symbiotic bacterium).